Reading from the N-terminus, the 565-residue chain is uncharacterized protein (565 aa).

Transmembrane regions (helical) follow at residues 8–28 (ISFI…GIFF), 43–63 (LAIF…LALI), 95–115 (MTYL…ICSI), 137–157 (WLIW…IPPL), 167–187 (MVVS…GFIV), 227–247 (FTGI…FFAY), 268–288 (WALF…AVAL), 314–334 (IVFG…INGF), 367–387 (VVGV…FTVI), 424–444 (ATWT…GAIV), 460–480 (FLPA…VTII), 482–502 (PFIN…TVLG), and 516–536 (VMLI…VYVE).

The protein to M.pneumoniae MPN_095 and MPN_096.

It is found in the cell membrane. This is an uncharacterized protein from Mycoplasma pneumoniae (strain ATCC 29342 / M129 / Subtype 1) (Mycoplasmoides pneumoniae).